We begin with the raw amino-acid sequence, 55 residues long: uncharacterized protein (55 aa).

This is an uncharacterized protein from Mycobacterium tuberculosis (strain ATCC 25618 / H37Rv).